Here is a 413-residue protein sequence, read N- to C-terminus: Sporulation-specific protein 74 (413 aa).

The segment at 1-87 (MGAGTLLNGL…SEHTDDFNDG (87 aa)) is disordered. Basic and acidic residues predominate over residues 69 to 83 (HENKDIHERSEHTDD).

As to quaternary structure, interacts with itself. Interacts with MPC54, NUD1 and SPO21/MPC70.

It is found in the cytoplasm. The protein resides in the cytoskeleton. The protein localises to the microtubule organizing center. Its subcellular location is the spindle pole body. Functionally, involved in the pathway that organizes the shaping and sizing of the prospore membrane (PSM) during sporulation. Probable component of a core structural unit of the scaffold that initiates synthesis of the prospore membrane. The protein is Sporulation-specific protein 74 (SPO74) of Saccharomyces cerevisiae (strain ATCC 204508 / S288c) (Baker's yeast).